A 451-amino-acid polypeptide reads, in one-letter code: UDP-N-acetylmuramoylalanine--D-glutamate ligase (451 aa).

Residue 118-124 (GTKGKST) coordinates ATP.

The protein belongs to the MurCDEF family.

The protein resides in the cytoplasm. It carries out the reaction UDP-N-acetyl-alpha-D-muramoyl-L-alanine + D-glutamate + ATP = UDP-N-acetyl-alpha-D-muramoyl-L-alanyl-D-glutamate + ADP + phosphate + H(+). The protein operates within cell wall biogenesis; peptidoglycan biosynthesis. Functionally, cell wall formation. Catalyzes the addition of glutamate to the nucleotide precursor UDP-N-acetylmuramoyl-L-alanine (UMA). The chain is UDP-N-acetylmuramoylalanine--D-glutamate ligase (murD) from Borreliella burgdorferi (strain ATCC 35210 / DSM 4680 / CIP 102532 / B31) (Borrelia burgdorferi).